The following is a 525-amino-acid chain: Glutamate--cysteine ligase (525 aa).

It belongs to the glutamate--cysteine ligase type 1 family. Type 1 subfamily.

It carries out the reaction L-cysteine + L-glutamate + ATP = gamma-L-glutamyl-L-cysteine + ADP + phosphate + H(+). It functions in the pathway sulfur metabolism; glutathione biosynthesis; glutathione from L-cysteine and L-glutamate: step 1/2. The sequence is that of Glutamate--cysteine ligase from Pseudomonas putida (strain ATCC 47054 / DSM 6125 / CFBP 8728 / NCIMB 11950 / KT2440).